Consider the following 33-residue polypeptide: Cytochrome b6-f complex subunit 8 (33 aa).

A helical membrane pass occupies residues 2-22 (LFTIAWASLAAVFSFSIAMVV).

The protein belongs to the PetN family. The 4 large subunits of the cytochrome b6-f complex are cytochrome b6, subunit IV (17 kDa polypeptide, PetD), cytochrome f and the Rieske protein, while the 4 small subunits are PetG, PetL, PetM and PetN. The complex functions as a dimer.

The protein resides in the cellular thylakoid membrane. In terms of biological role, component of the cytochrome b6-f complex, which mediates electron transfer between photosystem II (PSII) and photosystem I (PSI), cyclic electron flow around PSI, and state transitions. The protein is Cytochrome b6-f complex subunit 8 of Synechococcus sp. (strain CC9311).